Reading from the N-terminus, the 760-residue chain is Xaa-Pro dipeptidyl-peptidase (760 aa).

Active-site charge relay system residues include Ser349, Asp469, and His499.

The protein belongs to the peptidase S15 family. As to quaternary structure, homodimer.

It is found in the cytoplasm. The catalysed reaction is Hydrolyzes Xaa-Pro-|- bonds to release unblocked, N-terminal dipeptides from substrates including Ala-Pro-|-p-nitroanilide and (sequentially) Tyr-Pro-|-Phe-Pro-|-Gly-Pro-|-Ile.. In terms of biological role, removes N-terminal dipeptides sequentially from polypeptides having unsubstituted N-termini provided that the penultimate residue is proline. This Streptococcus pyogenes serotype M4 (strain MGAS10750) protein is Xaa-Pro dipeptidyl-peptidase.